The sequence spans 421 residues: MRILVFLWLGLSSLFAVDATLEVVKKFANMPSIIVEDSSTREVERGLTLRVYKMLVGDLKVSSHFNVQEGGASSFDMVMDYGAYRQKKVDLVAKVKAGREGSGILAELRLYDVNSGDSVFAKSYTVAREDRYPFVAHKMAIDINNYIKAPSIDWMNRFVVLSKYTAPSESQIVVADYTLTFQNVIIKDGRLNIFPKWANEQQDAIYYTKYLTKPTLFRYNLYTGESRKITESEGMLVASDVSADGKKLLLTMAPHTQSDIFLFDTQTGTRKQLTRYPGIDVSAHFIEDERRIMFISDRLGYPNVFATGLDGSETVEQMVFHGRNNNAASAFGQYIVYSSRESSNEFDTNTFNLYLVSTKSDYIRRLTANGVNQMPRFSQDGETVMYLKHNGAQSALGVIRLNYNKSYLFPLPSGKIQSMDW.

The first 16 residues, 1-16 (MRILVFLWLGLSSLFA), serve as a signal peptide directing secretion.

This sequence belongs to the TolB family. As to quaternary structure, the Tol-Pal system is composed of five core proteins: the inner membrane proteins TolA, TolQ and TolR, the periplasmic protein TolB and the outer membrane protein Pal. They form a network linking the inner and outer membranes and the peptidoglycan layer.

It localises to the periplasm. Functionally, part of the Tol-Pal system, which plays a role in outer membrane invagination during cell division and is important for maintaining outer membrane integrity. The polypeptide is Tol-Pal system protein TolB (Wolinella succinogenes (strain ATCC 29543 / DSM 1740 / CCUG 13145 / JCM 31913 / LMG 7466 / NCTC 11488 / FDC 602W) (Vibrio succinogenes)).